The following is a 480-amino-acid chain: Transmembrane protein 161A (480 aa).

A signal peptide spans 1-28 (MAVLGVQLVVTLFTATLMHRLAPHCSFA). Topologically, residues 29–98 (RWLLCNGSLF…LTAVDALVLR (70 aa)) are extracellular. An N-linked (GlcNAc...) asparagine glycan is attached at Asn34. The helical transmembrane segment at 99 to 119 (FFLEYQWFVDFAVYSVGVYLF) threads the bilayer. The Cytoplasmic segment spans residues 120-134 (TEAYYFVLGPVQETN). Residues 135–155 (IAVFWCLLTLAFSLKVFLMVT) form a helical membrane-spanning segment. Topologically, residues 156–166 (RLYFSTKEGGE) are extracellular. The helical transmembrane segment at 167–187 (RSVCLSFAFLFLLLAMLVQVV) threads the bilayer. Over 188 to 224 (REETLELGLEPGLASMTQHLEPILKKQDWDWTLPVIK) the chain is Cytoplasmic. A helical transmembrane segment spans residues 225 to 245 (LAIRLGLAVLGSLLGAFLIFP). Topologically, residues 246-263 (GLRLAQTHQDALTLSADR) are extracellular. The helical transmembrane segment at 264–284 (PLLQLLLHTSFLSPLCTLWLW) threads the bilayer. The Cytoplasmic segment spans residues 285 to 304 (TKPVARDFLYQAPTRNMTFS). A helical transmembrane segment spans residues 305–325 (VPSEGAFDSLRLWVLVALCLL). Over 326–370 (RLAVTRPHLQAYLCLAKARVEQLRKEAGRIEAREIQQRVVRVYCY) the chain is Extracellular. A helical membrane pass occupies residues 371–391 (VTVVSLQYLTPLILTLHCTLL). Residues 392-450 (LKTLGGYSWALSSTPPPLAPSQPSEALIPVDPAGDEAQQTAAQVAGILGGLLTPLFLRG) lie on the Cytoplasmic side of the membrane. The chain crosses the membrane as a helical span at residues 451-473 (MLAYIIWWTAACQLLSSLFGLYF). Residues 474-480 (HQHLAAS) lie on the Extracellular side of the membrane.

The protein belongs to the TMEM161 family.

The protein localises to the membrane. In terms of biological role, may play a role in protection against oxidative stress. Overexpression leads to reduced levels of oxidant-induced DNA damage and apoptosis. The chain is Transmembrane protein 161A (Tmem161a) from Mus musculus (Mouse).